We begin with the raw amino-acid sequence, 236 residues long: tRNA1(Val) (adenine(37)-N6)-methyltransferase (236 aa).

The protein belongs to the methyltransferase superfamily. tRNA (adenine-N(6)-)-methyltransferase family.

Its subcellular location is the cytoplasm. The catalysed reaction is adenosine(37) in tRNA1(Val) + S-adenosyl-L-methionine = N(6)-methyladenosine(37) in tRNA1(Val) + S-adenosyl-L-homocysteine + H(+). Its function is as follows. Specifically methylates the adenine in position 37 of tRNA(1)(Val) (anticodon cmo5UAC). The chain is tRNA1(Val) (adenine(37)-N6)-methyltransferase from Shewanella sp. (strain MR-4).